The following is a 132-amino-acid chain: Probable prefoldin subunit 4 (132 aa).

The protein belongs to the prefoldin subunit beta family. As to quaternary structure, heterohexamer of two PFD-alpha type and four PFD-beta type subunits.

In terms of biological role, binds specifically to cytosolic chaperonin (c-CPN) and transfers target proteins to it. Binds to nascent polypeptide chain and promotes folding in an environment in which there are many competing pathways for nonnative proteins. This is Probable prefoldin subunit 4 (pfdn4) from Dictyostelium discoideum (Social amoeba).